The primary structure comprises 58 residues: UPF0391 membrane protein Sden_3712 (58 aa).

2 consecutive transmembrane segments (helical) span residues leucine 6–alanine 26 and alanine 27–valine 47.

The protein belongs to the UPF0391 family.

The protein resides in the cell membrane. This Shewanella denitrificans (strain OS217 / ATCC BAA-1090 / DSM 15013) protein is UPF0391 membrane protein Sden_3712.